A 464-amino-acid polypeptide reads, in one-letter code: 3-isopropylmalate dehydratase large subunit (464 aa).

[4Fe-4S] cluster is bound by residues cysteine 337, cysteine 397, and cysteine 400.

Belongs to the aconitase/IPM isomerase family. LeuC type 1 subfamily. In terms of assembly, heterodimer of LeuC and LeuD. Requires [4Fe-4S] cluster as cofactor.

It catalyses the reaction (2R,3S)-3-isopropylmalate = (2S)-2-isopropylmalate. It participates in amino-acid biosynthesis; L-leucine biosynthesis; L-leucine from 3-methyl-2-oxobutanoate: step 2/4. In terms of biological role, catalyzes the isomerization between 2-isopropylmalate and 3-isopropylmalate, via the formation of 2-isopropylmaleate. The sequence is that of 3-isopropylmalate dehydratase large subunit from Bacillus cereus (strain 03BB102).